The primary structure comprises 76 residues: DNA-directed RNA polymerase subunit epsilon (76 aa).

It belongs to the RNA polymerase subunit epsilon family. In terms of assembly, RNAP is composed of a core of 2 alpha, a beta and a beta' subunit. The core is associated with a delta subunit, and at least one of epsilon or omega. When a sigma factor is associated with the core the holoenzyme is formed, which can initiate transcription.

It carries out the reaction RNA(n) + a ribonucleoside 5'-triphosphate = RNA(n+1) + diphosphate. Its function is as follows. A non-essential component of RNA polymerase (RNAP). In Streptococcus agalactiae serotype Ia (strain ATCC 27591 / A909 / CDC SS700), this protein is DNA-directed RNA polymerase subunit epsilon.